Here is a 262-residue protein sequence, read N- to C-terminus: Putative hydro-lyase ROP_32680 (262 aa).

The protein belongs to the D-glutamate cyclase family.

This is Putative hydro-lyase ROP_32680 from Rhodococcus opacus (strain B4).